A 385-amino-acid polypeptide reads, in one-letter code: Glucans biosynthesis protein C (385 aa).

10 consecutive transmembrane segments (helical) span residues 17–37, 60–80, 91–111, 137–157, 173–193, 212–232, 239–259, 274–294, 311–331, and 338–358; these read AWLM…SHTW, MQVF…RYPL, VGIP…IMLQ, ISHL…VWIF, KFSM…YAVI, FIVM…LAFI, LFTT…VAYL, TESV…FSFG, ASLF…AYIT, and WLGF…LYEI.

Belongs to the acyltransferase 3 family. OpgC subfamily.

The protein localises to the cell membrane. It functions in the pathway glycan metabolism; osmoregulated periplasmic glucan (OPG) biosynthesis. Functionally, necessary for the succinyl substitution of periplasmic glucans. Could catalyze the transfer of succinyl residues from the cytoplasmic side of the membrane to the nascent glucan backbones on the periplasmic side of the membrane. This Escherichia coli O6:K15:H31 (strain 536 / UPEC) protein is Glucans biosynthesis protein C.